The chain runs to 86 residues: Small ribosomal subunit protein uS17 (86 aa).

This sequence belongs to the universal ribosomal protein uS17 family. Part of the 30S ribosomal subunit.

Functionally, one of the primary rRNA binding proteins, it binds specifically to the 5'-end of 16S ribosomal RNA. The sequence is that of Small ribosomal subunit protein uS17 from Streptococcus gordonii (strain Challis / ATCC 35105 / BCRC 15272 / CH1 / DL1 / V288).